Reading from the N-terminus, the 714-residue chain is Angiogenic factor with G patch and FHA domains 1 (714 aa).

Residues 1 to 18 (MASEAPSPPRSPPPPTSP) show a composition bias toward pro residues. 3 disordered regions span residues 1-22 (MASE…EPEL), 259-307 (QPYP…HTSC), and 322-384 (IGIH…SYDE). Alanine 2 bears the N-acetylalanine mark. A phosphoserine mark is found at serine 7 and serine 11. Residues 18 to 88 (PEPELAQLRR…QRGRNEDNKK (71 aa)) are a coiled coil. The span at 279–298 (KDPDSSATNEEKDLNSEDQK) shows a compositional bias: basic and acidic residues. Over residues 335 to 355 (VPTSGNTIESPLHENISNSTS) the composition is skewed to polar residues. Serine 344 carries the phosphoserine modification. A compositionally biased stretch (acidic residues) spans 364–383 (TDSEPEEGEITDSQTEDSYD). The FHA domain maps to 434–487 (ATIGREKDMEHTLRIPEVGVSKFHAEIYFDHDLQSYVLVDQGSQNGTIVNGKQI). Basic and acidic residues predominate over residues 586–609 (KYKDRAGKRREQVGSEGTFQRDDA). Disordered stretches follow at residues 586-617 (KYKD…HSEI) and 655-714 (RTHA…GTLE). In terms of domain architecture, G-patch spans 619–665 (DSNKGRKMLEKMGWKKGEGLGKDGGGMKTPIQLQLRRTHAGLGTGKP). The residue at position 664 (lysine 664) is an N6-acetyllysine. Over residues 680–690 (KNWDKARERFT) the composition is skewed to basic and acidic residues.

Interacts with the secreted angiogenic factor TNFSF12. As to expression, widely expressed. Expressed in endothelial cells, vascular smooth muscle cells and osteoblasts. Expressed in umbilical vein endothelial cells and microvascular endothelial cells.

The protein localises to the cytoplasm. It is found in the secreted. Functionally, promotes angiogenesis and the proliferation of endothelial cells. Able to bind to endothelial cells and promote cell proliferation, suggesting that it may act in an autocrine fashion. The protein is Angiogenic factor with G patch and FHA domains 1 (AGGF1) of Homo sapiens (Human).